Here is a 120-residue protein sequence, read N- to C-terminus: Ribonuclease P protein component 2 (120 aa).

The protein belongs to the eukaryotic/archaeal RNase P protein component 2 family. In terms of assembly, consists of a catalytic RNA component and at least 4-5 protein subunits. Forms a subcomplex with Rnp3 which stimulates the catalytic RNA.

The protein localises to the cytoplasm. It catalyses the reaction Endonucleolytic cleavage of RNA, removing 5'-extranucleotides from tRNA precursor.. Functionally, part of ribonuclease P, a protein complex that generates mature tRNA molecules by cleaving their 5'-ends. The RNA is catalytic, but its KM for pre-tRNA is 170-fold decreased in the presence of the 4 known protein subunits (Rnp1-4). The protein subunits also decrease the amount of Mg(2+) needed for activity. The sequence is that of Ribonuclease P protein component 2 from Pyrococcus furiosus (strain ATCC 43587 / DSM 3638 / JCM 8422 / Vc1).